A 73-amino-acid polypeptide reads, in one-letter code: Small ribosomal subunit protein uS15c (73 aa).

Belongs to the universal ribosomal protein uS15 family. Part of the 30S ribosomal subunit.

Its subcellular location is the plastid. The protein resides in the chloroplast. The polypeptide is Small ribosomal subunit protein uS15c (rps15) (Welwitschia mirabilis (Tree tumbo)).